The primary structure comprises 838 residues: V-type proton ATPase 116 kDa subunit a 1 (838 aa).

Topologically, residues 1–388 (MGELFRSEEM…DAYGIGTYRE (388 aa)) are cytoplasmic. Residues 389–407 (INPAPYTIITFPFLFAVMF) traverse the membrane as a helical segment. The Vacuolar segment spans residues 408–409 (GD). The chain crosses the membrane as a helical span at residues 410–426 (FGHGILMTLIAIWMVLR). At 427 to 441 (ESRILSQKSDNEMFS) the chain is on the cytoplasmic side. Residues 442 to 471 (TVFSGRYIILLMGLFSTYTGLIYNDCFSKS) form a helical membrane-spanning segment. Residues 472–535 (LNMFGSSWSV…ANNKLAFLNS (64 aa)) are Vacuolar-facing. Residues 536-555 (FKMKMSVILGIIHMLFGVML) traverse the membrane as a helical segment. At 556 to 573 (SLLNHIYFKKPLNIYLGF) the chain is on the cytoplasmic side. The helical transmembrane segment at 574–594 (IPEMIFMSSLFGYLVILIFYK) threads the bilayer. Topologically, residues 595–639 (WTAYDAHTSKEAPSPLIHFINMFLFSYGDTSNKMLYRGQKGIQCF) are vacuolar. The chain crosses the membrane as a helical span at residues 640–659 (LVVVALLCVPWMLVAKPLVL). Topologically, residues 660-725 (RHQYLRRKHL…DTVVYQAIHT (66 aa)) are cytoplasmic. Residues 726–750 (IEYCLGCISNTASYLRLWALSLAHA) form a helical membrane-spanning segment. The Vacuolar portion of the chain corresponds to 751-771 (QLSEVLWTMVIHTGLSVRSLA). The chain crosses the membrane as a helical span at residues 772-810 (GGFGLVFIFAAFATLTVAILLVMEGLSAFLHALRLHWIE). The Cytoplasmic segment spans residues 811–838 (FQNKFYTGTGFKFLPFSFDPIREGKFDD).

It belongs to the V-ATPase 116 kDa subunit family. As to quaternary structure, V-ATPase is a heteromultimeric enzyme made up of two complexes: the ATP-hydrolytic V1 complex and the proton translocation V0 complex. The V1 complex consists of three catalytic AB heterodimers that form a heterohexamer, three peripheral stalks each consisting of EG heterodimers, one central rotor including subunits D and F, and the regulatory subunits C and H. The proton translocation complex V0 consists of the proton transport subunit a, a ring of proteolipid subunits c9c'', rotary subunit d, subunits e and f, and two accessory subunits. In terms of tissue distribution, detected in brain (at protein level). Highest expression in brain, intermediate levels in kidney, and relatively low levels in bone and liver.

Its subcellular location is the cytoplasmic vesicle. The protein localises to the clathrin-coated vesicle membrane. It is found in the secretory vesicle. The protein resides in the synaptic vesicle membrane. It localises to the melanosome. In terms of biological role, subunit of the V0 complex of vacuolar(H+)-ATPase (V-ATPase), a multisubunit enzyme composed of a peripheral complex (V1) that hydrolyzes ATP and a membrane integral complex (V0) that translocates protons. V-ATPase is responsible for acidifying and maintaining the pH of intracellular compartments and in some cell types, is targeted to the plasma membrane, where it is responsible for acidifying the extracellular environment. Required for assembly and activity of the vacuolar ATPase. The polypeptide is V-type proton ATPase 116 kDa subunit a 1 (ATP6V0A1) (Gallus gallus (Chicken)).